The chain runs to 169 residues: Sorting nexin-24 (169 aa).

At Met1 the chain carries N-acetylmethionine. The PX domain occupies 1–125 (MEVYIPSFRY…SFDETESEES (125 aa)). A 1,2-diacyl-sn-glycero-3-phospho-(1D-myo-inositol-3-phosphate)-binding residues include Arg38, Ser40, Lys61, and Arg74. A phosphoserine mark is found at Ser113 and Ser116.

Belongs to the sorting nexin family.

It localises to the cytoplasmic vesicle membrane. In terms of biological role, may be involved in several stages of intracellular trafficking. This is Sorting nexin-24 (SNX24) from Bos taurus (Bovine).